A 333-amino-acid polypeptide reads, in one-letter code: Protoheme IX farnesyltransferase (333 aa).

The next 8 membrane-spanning stretches (helical) occupy residues 36–56 (LIPL…GWPL), 61–81 (LVCT…LNCL), 107–127 (AAFA…VSGV), 130–150 (LAAG…TALL), 158–178 (IVIG…AATG), 186–206 (WLFA…ALLL), 243–263 (FLGV…LLPF), and 284–304 (AKGL…LLVF).

This sequence belongs to the UbiA prenyltransferase family. Protoheme IX farnesyltransferase subfamily.

The protein localises to the cell inner membrane. The catalysed reaction is heme b + (2E,6E)-farnesyl diphosphate + H2O = Fe(II)-heme o + diphosphate. Its pathway is porphyrin-containing compound metabolism; heme O biosynthesis; heme O from protoheme: step 1/1. Converts heme B (protoheme IX) to heme O by substitution of the vinyl group on carbon 2 of heme B porphyrin ring with a hydroxyethyl farnesyl side group. The sequence is that of Protoheme IX farnesyltransferase from Synechococcus sp. (strain WH7803).